We begin with the raw amino-acid sequence, 627 residues long: Pescadillo homolog (627 aa).

One can recognise a BRCT domain in the interval 321-414 (RLRTLFKGLK…QLLPTNKYFI (94 aa)). Disordered stretches follow at residues 450-469 (HVQS…ETVD), 488-562 (YKKF…LQAR), and 595-627 (TIEA…KLGK). S453 and S457 each carry phosphoserine. Acidic residues-rich tracts occupy residues 454–469 (DDDS…ETVD) and 497–521 (VNED…EELD). Residues 507 to 538 (DDDNEDDDEEEEELDEKTKRLQEEKQKMSVQS) are a coiled coil. The segment covering 522 to 533 (EKTKRLQEEKQK) has biased composition (basic and acidic residues). Basic residues predominate over residues 540 to 549 (KVHKVNKRQV). Composition is skewed to basic and acidic residues over residues 550–559 (HKAEVDEHRL) and 595–615 (TIEA…RKEA). Residues 582–625 (KEKEEWLLRKKRRTIEASEKEARKTAKREARKEAAAAAAKASKL) are a coiled coil. Residues 616 to 627 (AAAAAKASKLGK) are compositionally biased toward low complexity.

The protein belongs to the pescadillo family.

It is found in the nucleus. The protein localises to the nucleolus. It localises to the nucleoplasm. Its function is as follows. Required for maturation of ribosomal RNAs and formation of the large ribosomal subunit. The chain is Pescadillo homolog from Drosophila sechellia (Fruit fly).